The chain runs to 172 residues: Adenine phosphoribosyltransferase (172 aa).

The protein belongs to the purine/pyrimidine phosphoribosyltransferase family. As to quaternary structure, homodimer.

It is found in the cytoplasm. It carries out the reaction AMP + diphosphate = 5-phospho-alpha-D-ribose 1-diphosphate + adenine. It functions in the pathway purine metabolism; AMP biosynthesis via salvage pathway; AMP from adenine: step 1/1. Catalyzes a salvage reaction resulting in the formation of AMP, that is energically less costly than de novo synthesis. In Streptococcus pyogenes serotype M12 (strain MGAS9429), this protein is Adenine phosphoribosyltransferase.